The primary structure comprises 102 residues: MPGQRIRIKLKAYDHELLDESAKKIVEVAKSTNSKVSGPIPLPTERTLYCVLRSPMKHKDSREHFEKRVHKRLIDIIDPSPKTIDALMRINLPAGVDVEIKL.

This sequence belongs to the universal ribosomal protein uS10 family. Part of the 30S ribosomal subunit.

Involved in the binding of tRNA to the ribosomes. This is Small ribosomal subunit protein uS10 from Thermotoga neapolitana (strain ATCC 49049 / DSM 4359 / NBRC 107923 / NS-E).